Reading from the N-terminus, the 350-residue chain is tRNA uridine(34) hydroxylase (350 aa).

The Rhodanese domain maps to 146–240 (DDPEAVFVDM…YARRAREQGL (95 aa)). Cys200 serves as the catalytic Cysteine persulfide intermediate.

Belongs to the TrhO family.

The enzyme catalyses uridine(34) in tRNA + AH2 + O2 = 5-hydroxyuridine(34) in tRNA + A + H2O. In terms of biological role, catalyzes oxygen-dependent 5-hydroxyuridine (ho5U) modification at position 34 in tRNAs. The sequence is that of tRNA uridine(34) hydroxylase from Erwinia tasmaniensis (strain DSM 17950 / CFBP 7177 / CIP 109463 / NCPPB 4357 / Et1/99).